The following is a 293-amino-acid chain: Diaminopimelate epimerase (293 aa).

The substrate site is built by asparagine 17, glutamine 47, and asparagine 67. The Proton donor role is filled by cysteine 76. Substrate contacts are provided by residues 77-78 (GN), asparagine 164, asparagine 197, and 215-216 (ER). Residue cysteine 224 is the Proton acceptor of the active site. Residue 225 to 226 (GS) participates in substrate binding.

The protein belongs to the diaminopimelate epimerase family. Homodimer.

It is found in the cytoplasm. The catalysed reaction is (2S,6S)-2,6-diaminopimelate = meso-2,6-diaminopimelate. The protein operates within amino-acid biosynthesis; L-lysine biosynthesis via DAP pathway; DL-2,6-diaminopimelate from LL-2,6-diaminopimelate: step 1/1. Its function is as follows. Catalyzes the stereoinversion of LL-2,6-diaminopimelate (L,L-DAP) to meso-diaminopimelate (meso-DAP), a precursor of L-lysine and an essential component of the bacterial peptidoglycan. The sequence is that of Diaminopimelate epimerase from Rhodopseudomonas palustris (strain BisB5).